A 245-amino-acid chain; its full sequence is Octanoyltransferase (245 aa).

The 189-residue stretch at 54–242 folds into the BPL/LPL catalytic domain; the sequence is KTAHEQVWLL…AFEKIFGPTI (189 aa). Substrate is bound by residues 93-100, 173-175, and 186-188; these read RGGEFTYH, AIG, and GVS. Residue Cys-204 is the Acyl-thioester intermediate of the active site.

Belongs to the LipB family.

The protein localises to the cytoplasm. It catalyses the reaction octanoyl-[ACP] + L-lysyl-[protein] = N(6)-octanoyl-L-lysyl-[protein] + holo-[ACP] + H(+). It functions in the pathway protein modification; protein lipoylation via endogenous pathway; protein N(6)-(lipoyl)lysine from octanoyl-[acyl-carrier-protein]: step 1/2. Catalyzes the transfer of endogenously produced octanoic acid from octanoyl-acyl-carrier-protein onto the lipoyl domains of lipoate-dependent enzymes. Lipoyl-ACP can also act as a substrate although octanoyl-ACP is likely to be the physiological substrate. The protein is Octanoyltransferase of Bartonella tribocorum (strain CIP 105476 / IBS 506).